We begin with the raw amino-acid sequence, 434 residues long: Urokinase-type plasminogen activator (434 aa).

Positions 1–20 (MKLIIFLTVTLCTLVTGLDS) are cleaved as a signal peptide. One can recognise an EGF-like domain in the interval 36 to 72 (QHRECQCLNGGTCITYRFFSQIKRCLCPEGYGGLHCE). Intrachain disulfides connect Cys-40–Cys-48, Cys-42–Cys-60, Cys-62–Cys-71, Cys-79–Cys-158, Cys-96–Cys-139, Cys-128–Cys-152, Cys-162–Cys-296, Cys-202–Cys-218, Cys-210–Cys-285, Cys-310–Cys-379, Cys-342–Cys-358, and Cys-369–Cys-397. The region spanning 79-158 (CYSGNGEDYR…ETPCSTIEKC (80 aa)) is the Kringle domain. Positions 159 to 172 (ERTCGQRSFSKYFK) are connecting peptide. Positions 173 to 421 (IVGGSQAEVE…YLNWIDSNMN (249 aa)) constitute a Peptidase S1 domain. His-217 serves as the catalytic Charge relay system. An N-linked (GlcNAc...) asparagine glycan is attached at Asn-228. The active-site Charge relay system is Asp-272. The active-site Charge relay system is Ser-373.

Belongs to the peptidase S1 family.

It is found in the secreted. It catalyses the reaction Specific cleavage of Arg-|-Val bond in plasminogen to form plasmin.. Functionally, specifically cleaves the zymogen plasminogen to form the active enzyme plasmin. The chain is Urokinase-type plasminogen activator (PLAU) from Gallus gallus (Chicken).